The chain runs to 202 residues: NADH-quinone oxidoreductase subunit C (202 aa).

Belongs to the complex I 30 kDa subunit family. NDH-1 is composed of 14 different subunits. Subunits NuoB, C, D, E, F, and G constitute the peripheral sector of the complex.

Its subcellular location is the cell inner membrane. The catalysed reaction is a quinone + NADH + 5 H(+)(in) = a quinol + NAD(+) + 4 H(+)(out). Functionally, NDH-1 shuttles electrons from NADH, via FMN and iron-sulfur (Fe-S) centers, to quinones in the respiratory chain. The immediate electron acceptor for the enzyme in this species is believed to be ubiquinone. Couples the redox reaction to proton translocation (for every two electrons transferred, four hydrogen ions are translocated across the cytoplasmic membrane), and thus conserves the redox energy in a proton gradient. The sequence is that of NADH-quinone oxidoreductase subunit C from Brucella abortus (strain 2308).